A 366-amino-acid chain; its full sequence is Chorismate synthase (366 aa).

Residues Arg48 and Arg54 each contribute to the NADP(+) site. FMN is bound by residues 125–127 (RSS), 237–238 (NA), Gly277, 292–296 (KPTSS), and Arg318.

This sequence belongs to the chorismate synthase family. In terms of assembly, homotetramer. FMNH2 serves as cofactor.

The catalysed reaction is 5-O-(1-carboxyvinyl)-3-phosphoshikimate = chorismate + phosphate. It functions in the pathway metabolic intermediate biosynthesis; chorismate biosynthesis; chorismate from D-erythrose 4-phosphate and phosphoenolpyruvate: step 7/7. In terms of biological role, catalyzes the anti-1,4-elimination of the C-3 phosphate and the C-6 proR hydrogen from 5-enolpyruvylshikimate-3-phosphate (EPSP) to yield chorismate, which is the branch point compound that serves as the starting substrate for the three terminal pathways of aromatic amino acid biosynthesis. This reaction introduces a second double bond into the aromatic ring system. This chain is Chorismate synthase, found in Acidovorax sp. (strain JS42).